Here is a 30-residue protein sequence, read N- to C-terminus: Photosystem I reaction center subunit XII (30 aa).

A helical transmembrane segment spans residues 7–26 (IFVALLFALVSAVLAIRLGT).

This sequence belongs to the PsaM family.

Its subcellular location is the plastid. It is found in the chloroplast thylakoid membrane. This Gracilaria tenuistipitata var. liui (Red alga) protein is Photosystem I reaction center subunit XII.